Here is a 216-residue protein sequence, read N- to C-terminus: Acyl-homoserine-lactone synthase (216 aa).

Belongs to the autoinducer synthase family.

The catalysed reaction is a fatty acyl-[ACP] + S-adenosyl-L-methionine = an N-acyl-L-homoserine lactone + S-methyl-5'-thioadenosine + holo-[ACP] + H(+). Required for the synthesis of OHHL (N-(3-oxohexanoyl)-L-homoserine lactone), an autoinducer molecule which binds to a yet uncharacterized transcriptional regulator. The chain is Acyl-homoserine-lactone synthase (eagI) from Enterobacter agglomerans (Erwinia herbicola).